The following is a 487-amino-acid chain: GTPase Der (487 aa).

2 consecutive EngA-type G domains span residues 3–167 (LTLA…DEME) and 203–378 (LQVA…EVWN). GTP-binding positions include 9–16 (GRPNVGKS), 56–60 (DTAGL), and 119–122 (NKAE). A compositionally biased stretch (acidic residues) spans 167–190 (EQQAEEQAPETDVDLDPEDEDGEE). The tract at residues 167–191 (EQQAEEQAPETDVDLDPEDEDGEEV) is disordered. Residues 209 to 216 (GRPNAGKS), 256 to 260 (DTAGM), and 321 to 324 (NKWD) contribute to the GTP site. A KH-like domain is found at 379-465 (RRIPTAALNR…RLTLRGQGDK (87 aa)). Residues 458–487 (TLRGQGDKNPYKGRRKKNAGALAKHLKSRG) form a disordered region. Basic residues predominate over residues 468–487 (YKGRRKKNAGALAKHLKSRG).

It belongs to the TRAFAC class TrmE-Era-EngA-EngB-Septin-like GTPase superfamily. EngA (Der) GTPase family. As to quaternary structure, associates with the 50S ribosomal subunit.

In terms of biological role, GTPase that plays an essential role in the late steps of ribosome biogenesis. The sequence is that of GTPase Der from Ruegeria pomeroyi (strain ATCC 700808 / DSM 15171 / DSS-3) (Silicibacter pomeroyi).